We begin with the raw amino-acid sequence, 325 residues long: Lipoyl synthase (325 aa).

Residues Cys-72, Cys-77, Cys-83, Cys-98, Cys-102, Cys-105, and Ser-312 each coordinate [4Fe-4S] cluster. In terms of domain architecture, Radical SAM core spans Phe-84–Lys-301.

This sequence belongs to the radical SAM superfamily. Lipoyl synthase family. It depends on [4Fe-4S] cluster as a cofactor.

It localises to the cytoplasm. The enzyme catalyses [[Fe-S] cluster scaffold protein carrying a second [4Fe-4S](2+) cluster] + N(6)-octanoyl-L-lysyl-[protein] + 2 oxidized [2Fe-2S]-[ferredoxin] + 2 S-adenosyl-L-methionine + 4 H(+) = [[Fe-S] cluster scaffold protein] + N(6)-[(R)-dihydrolipoyl]-L-lysyl-[protein] + 4 Fe(3+) + 2 hydrogen sulfide + 2 5'-deoxyadenosine + 2 L-methionine + 2 reduced [2Fe-2S]-[ferredoxin]. It participates in protein modification; protein lipoylation via endogenous pathway; protein N(6)-(lipoyl)lysine from octanoyl-[acyl-carrier-protein]: step 2/2. Catalyzes the radical-mediated insertion of two sulfur atoms into the C-6 and C-8 positions of the octanoyl moiety bound to the lipoyl domains of lipoate-dependent enzymes, thereby converting the octanoylated domains into lipoylated derivatives. The chain is Lipoyl synthase from Stutzerimonas stutzeri (strain A1501) (Pseudomonas stutzeri).